A 366-amino-acid polypeptide reads, in one-letter code: Chorismate synthase (366 aa).

The NADP(+) site is built by arginine 48 and arginine 54. FMN is bound by residues 125 to 127 (RSS), 238 to 239 (NA), glycine 278, 293 to 297 (KPTSS), and arginine 319.

Belongs to the chorismate synthase family. In terms of assembly, homotetramer. The cofactor is FMNH2.

The enzyme catalyses 5-O-(1-carboxyvinyl)-3-phosphoshikimate = chorismate + phosphate. The protein operates within metabolic intermediate biosynthesis; chorismate biosynthesis; chorismate from D-erythrose 4-phosphate and phosphoenolpyruvate: step 7/7. Its function is as follows. Catalyzes the anti-1,4-elimination of the C-3 phosphate and the C-6 proR hydrogen from 5-enolpyruvylshikimate-3-phosphate (EPSP) to yield chorismate, which is the branch point compound that serves as the starting substrate for the three terminal pathways of aromatic amino acid biosynthesis. This reaction introduces a second double bond into the aromatic ring system. This chain is Chorismate synthase, found in Ralstonia pickettii (strain 12J).